We begin with the raw amino-acid sequence, 61 residues long: Small ribosomal subunit protein uS14 (61 aa).

Cys-24, Cys-27, Cys-40, and Cys-43 together coordinate Zn(2+).

Belongs to the universal ribosomal protein uS14 family. Zinc-binding uS14 subfamily. Part of the 30S ribosomal subunit. Contacts proteins S3 and S10. Requires Zn(2+) as cofactor.

Functionally, binds 16S rRNA, required for the assembly of 30S particles and may also be responsible for determining the conformation of the 16S rRNA at the A site. The sequence is that of Small ribosomal subunit protein uS14 from Spiroplasma citri.